Reading from the N-terminus, the 93-residue chain is Pyrimidine/purine nucleoside phosphorylase (93 aa).

This sequence belongs to the nucleoside phosphorylase PpnP family.

The catalysed reaction is a purine D-ribonucleoside + phosphate = a purine nucleobase + alpha-D-ribose 1-phosphate. It catalyses the reaction adenosine + phosphate = alpha-D-ribose 1-phosphate + adenine. The enzyme catalyses cytidine + phosphate = cytosine + alpha-D-ribose 1-phosphate. It carries out the reaction guanosine + phosphate = alpha-D-ribose 1-phosphate + guanine. The catalysed reaction is inosine + phosphate = alpha-D-ribose 1-phosphate + hypoxanthine. It catalyses the reaction thymidine + phosphate = 2-deoxy-alpha-D-ribose 1-phosphate + thymine. The enzyme catalyses uridine + phosphate = alpha-D-ribose 1-phosphate + uracil. It carries out the reaction xanthosine + phosphate = alpha-D-ribose 1-phosphate + xanthine. Functionally, catalyzes the phosphorolysis of diverse nucleosides, yielding D-ribose 1-phosphate and the respective free bases. Can use uridine, adenosine, guanosine, cytidine, thymidine, inosine and xanthosine as substrates. Also catalyzes the reverse reactions. The chain is Pyrimidine/purine nucleoside phosphorylase from Pseudomonas savastanoi pv. phaseolicola (strain 1448A / Race 6) (Pseudomonas syringae pv. phaseolicola (strain 1448A / Race 6)).